Reading from the N-terminus, the 592-residue chain is Coronatine-insensitive protein 1 (592 aa).

In terms of domain architecture, F-box spans 16–57 (TVDDVIEQVMTYITDPKDRDSASLVCRRWFKIDSETREHVTM). LRR repeat units lie at residues 58–82 (ALCY…KLKG), 83–102 (KPRA…YVTP), 103–120 (WVTE…VHFR), 121–154 (RMIV…FTTD), 155–182 (GLLS…KDGK), 183–210 (WLHE…ISPK), 211–236 (DLET…LELV), 237–264 (GFFK…EKYM), 265–283 (NLVF…MGPN), 284–308 (EMPI…LETE), 309–332 (DHCT…IGDR), 333–368 (GLEV…VSQR), 369–393 (GLIA…ITNE), 394–426 (SLES…PLDN), 427–456 (GVRS…LGLS), 457–478 (YIGQ…ESDE), 479–500 (GLME…GCCF), and 501–524 (SERA…QGYR). R85 lines the jasmonate pocket. Residues R348, Y386, and R409 each coordinate jasmonate. R496 serves as a coordination point for jasmonate.

Component of SCF(COI1) E3 ubiquitin ligase complexes at least composed of ASK1 or ASK2, CUL1, RBX1A or RBX1B and COI1. Interacts with ASK1 and ASK2, but separately. Also binds to ASK11 and ASK12. Interacts with RBCS-1B and HDA6. SCF complexes interact with the COP9 signalosome (CSN). Interacts with TIFY10A.

The protein operates within protein modification; protein ubiquitination. In terms of biological role, required for jasmonate-regulated plant fertility and defense processes, and for coronatine and/or other elicitors perceptions/responses. Seems to not be required for meiosis. Required for the regulation of some genes induced by wounding, but not for all. Component of SCF(COI1) E3 ubiquitin ligase complexes, which may mediate the ubiquitination and subsequent proteasomal degradation of target proteins (probably including the ribulose bisphosphate carboxylase small chain 1B RBCS-1B and the histone deacetylase HDA6). These SCF complexes play crucial roles in regulating response to jasmonate, and their interactions with the COP9 signalosome (CSN) appear to be important for their activity. Interacts with TIFY10A and inositol pentakisphosphate to form a high-affinity jasmonates coreceptor. Involved in the regulation of plant gene expression during plant-pathogen interactions with Pseudomonas syringae and Alternaria brassicicola. The protein is Coronatine-insensitive protein 1 (COI1) of Arabidopsis thaliana (Mouse-ear cress).